A 1297-amino-acid polypeptide reads, in one-letter code: Phosphoribosylformylglycinamidine synthase (1297 aa).

Residues 307–318 (GASTGSGGEIRD) and alanine 678 each bind ATP. Mg(2+) contacts are provided by glutamate 718, asparagine 722, and aspartate 886. The 254-residue stretch at 1044 to 1297 (MAILREQGVN…MFQNARKYFG (254 aa)) folds into the Glutamine amidotransferase type-1 domain. Cysteine 1137 (nucleophile) is an active-site residue. Catalysis depends on residues histidine 1262 and glutamate 1264.

In the N-terminal section; belongs to the FGAMS family. Monomer.

The protein localises to the cytoplasm. The enzyme catalyses N(2)-formyl-N(1)-(5-phospho-beta-D-ribosyl)glycinamide + L-glutamine + ATP + H2O = 2-formamido-N(1)-(5-O-phospho-beta-D-ribosyl)acetamidine + L-glutamate + ADP + phosphate + H(+). It functions in the pathway purine metabolism; IMP biosynthesis via de novo pathway; 5-amino-1-(5-phospho-D-ribosyl)imidazole from N(2)-formyl-N(1)-(5-phospho-D-ribosyl)glycinamide: step 1/2. Phosphoribosylformylglycinamidine synthase involved in the purines biosynthetic pathway. Catalyzes the ATP-dependent conversion of formylglycinamide ribonucleotide (FGAR) and glutamine to yield formylglycinamidine ribonucleotide (FGAM) and glutamate. The sequence is that of Phosphoribosylformylglycinamidine synthase from Vibrio cholerae serotype O1 (strain ATCC 39315 / El Tor Inaba N16961).